The sequence spans 129 residues: Profilin-4 (129 aa).

This sequence belongs to the profilin family. In terms of tissue distribution, expressed in testis, in seminiferous tubules (at protein level). Expressed in spermatocytes and spermatids, but not in spermatogonium.

Its subcellular location is the cytoplasm. Functionally, involved in male fertility. Required for manchette development and acrosome biogenesis during spermiogenesis. Binds in vitro to phospholipids, including phosphatidylinositol 3-phosphate (PtdIns(3)P), phosphatidylinositol 4,5-bisphosphate (PtdIns(4,5)P2), phosphatidylinositol 4-phosphate (PtdIns(4)P) and phosphatidic acid (PA). Contrary to other profilin family members, does not bind to actin in vitro. This Rattus norvegicus (Rat) protein is Profilin-4 (Pfn4).